We begin with the raw amino-acid sequence, 360 residues long: uncharacterized protein (360 aa).

This is an uncharacterized protein from Ostreid herpesvirus 1 (isolate France) (OsHV-1).